Here is a 425-residue protein sequence, read N- to C-terminus: Serine--tRNA ligase (425 aa).

230-232 (TAE) contacts L-serine. An ATP-binding site is contributed by 261 to 263 (RSE). Glu284 is an L-serine binding site. 348–351 (EISS) serves as a coordination point for ATP. Position 384 (Ser384) interacts with L-serine.

Belongs to the class-II aminoacyl-tRNA synthetase family. Type-1 seryl-tRNA synthetase subfamily. Homodimer. The tRNA molecule binds across the dimer.

It localises to the cytoplasm. The catalysed reaction is tRNA(Ser) + L-serine + ATP = L-seryl-tRNA(Ser) + AMP + diphosphate + H(+). It catalyses the reaction tRNA(Sec) + L-serine + ATP = L-seryl-tRNA(Sec) + AMP + diphosphate + H(+). It participates in aminoacyl-tRNA biosynthesis; selenocysteinyl-tRNA(Sec) biosynthesis; L-seryl-tRNA(Sec) from L-serine and tRNA(Sec): step 1/1. Catalyzes the attachment of serine to tRNA(Ser). Is also able to aminoacylate tRNA(Sec) with serine, to form the misacylated tRNA L-seryl-tRNA(Sec), which will be further converted into selenocysteinyl-tRNA(Sec). The protein is Serine--tRNA ligase of Streptococcus sanguinis (strain SK36).